The primary structure comprises 761 residues: Ribonucleoside-diphosphate reductase subunit alpha (761 aa).

Residues 5–95 (LFVTKRNGKI…IFHLRKKAFG (91 aa)) form the ATP-cone domain. ATP-binding positions include Lys-9, 15-21 (ELINLDK), Thr-55, and Lys-91. Thr-209 is a binding site for GDP. A disulfide bridge links Cys-225 with Cys-462. DTTP is bound by residues 232–234 (DNL), Arg-262, and Arg-269. Asn-437 provides a ligand contact to GDP. The active-site Proton acceptor is Asn-437. Catalysis depends on Cys-439, which acts as the Cysteine radical intermediate. GDP-binding positions include Glu-441 and 623–625 (ETS). Catalysis depends on Glu-441, which acts as the Proton acceptor.

Belongs to the ribonucleoside diphosphate reductase large chain family. Tetramer of two alpha and two beta subunits.

The enzyme catalyses a 2'-deoxyribonucleoside 5'-diphosphate + [thioredoxin]-disulfide + H2O = a ribonucleoside 5'-diphosphate + [thioredoxin]-dithiol. Its activity is regulated as follows. Under complex allosteric control mediated by deoxynucleoside triphosphates and ATP binding to separate specificity and activation sites on the alpha subunit. The type of nucleotide bound at the specificity site determines substrate preference. It seems probable that ATP makes the enzyme reduce CDP and UDP, dGTP favors ADP reduction and dTTP favors GDP reduction. Stimulated by ATP and inhibited by dATP binding to the activity site. Its function is as follows. Provides the precursors necessary for DNA synthesis. Catalyzes the biosynthesis of deoxyribonucleotides from the corresponding ribonucleotides. This is Ribonucleoside-diphosphate reductase subunit alpha (nrdA) from Buchnera aphidicola subsp. Baizongia pistaciae (strain Bp).